The sequence spans 382 residues: Biotin synthase (382 aa).

One can recognise a Radical SAM core domain in the interval 83 to 318; the sequence is CCGNVVDLCS…EQILRYAGGR (236 aa). 3 residues coordinate [4Fe-4S] cluster: Cys-101, Cys-105, and Cys-108. [2Fe-2S] cluster-binding residues include Cys-146, Cys-183, Cys-243, and Arg-313.

The protein belongs to the radical SAM superfamily. Biotin synthase family. Homodimer. Requires [4Fe-4S] cluster as cofactor. The cofactor is [2Fe-2S] cluster.

The enzyme catalyses (4R,5S)-dethiobiotin + (sulfur carrier)-SH + 2 reduced [2Fe-2S]-[ferredoxin] + 2 S-adenosyl-L-methionine = (sulfur carrier)-H + biotin + 2 5'-deoxyadenosine + 2 L-methionine + 2 oxidized [2Fe-2S]-[ferredoxin]. It functions in the pathway cofactor biosynthesis; biotin biosynthesis; biotin from 7,8-diaminononanoate: step 2/2. Catalyzes the conversion of dethiobiotin (DTB) to biotin by the insertion of a sulfur atom into dethiobiotin via a radical-based mechanism. This chain is Biotin synthase, found in Crocosphaera subtropica (strain ATCC 51142 / BH68) (Cyanothece sp. (strain ATCC 51142)).